The following is a 238-amino-acid chain: 1-(5-phosphoribosyl)-5-[(5-phosphoribosylamino)methylideneamino] imidazole-4-carboxamide isomerase (238 aa).

Asp-8 serves as the catalytic Proton acceptor. Asp-129 acts as the Proton donor in catalysis.

The protein belongs to the HisA/HisF family.

Its subcellular location is the cytoplasm. The enzyme catalyses 1-(5-phospho-beta-D-ribosyl)-5-[(5-phospho-beta-D-ribosylamino)methylideneamino]imidazole-4-carboxamide = 5-[(5-phospho-1-deoxy-D-ribulos-1-ylimino)methylamino]-1-(5-phospho-beta-D-ribosyl)imidazole-4-carboxamide. Its pathway is amino-acid biosynthesis; L-histidine biosynthesis; L-histidine from 5-phospho-alpha-D-ribose 1-diphosphate: step 4/9. The protein is 1-(5-phosphoribosyl)-5-[(5-phosphoribosylamino)methylideneamino] imidazole-4-carboxamide isomerase of Lacticaseibacillus paracasei (strain ATCC 334 / BCRC 17002 / CCUG 31169 / CIP 107868 / KCTC 3260 / NRRL B-441) (Lactobacillus paracasei).